The primary structure comprises 488 residues: Glutamyl-tRNA(Gln) amidotransferase subunit A (488 aa).

Residues Lys77 and Ser152 each act as charge relay system in the active site. Ser176 serves as the catalytic Acyl-ester intermediate.

This sequence belongs to the amidase family. GatA subfamily. Heterotrimer of A, B and C subunits.

It carries out the reaction L-glutamyl-tRNA(Gln) + L-glutamine + ATP + H2O = L-glutaminyl-tRNA(Gln) + L-glutamate + ADP + phosphate + H(+). Functionally, allows the formation of correctly charged Gln-tRNA(Gln) through the transamidation of misacylated Glu-tRNA(Gln) in organisms which lack glutaminyl-tRNA synthetase. The reaction takes place in the presence of glutamine and ATP through an activated gamma-phospho-Glu-tRNA(Gln). In Streptococcus uberis (strain ATCC BAA-854 / 0140J), this protein is Glutamyl-tRNA(Gln) amidotransferase subunit A.